A 232-amino-acid polypeptide reads, in one-letter code: Chaperone protein LpfB (232 aa).

Residues 1 to 23 (MNRSRLISCTALVLALIAQNSFA) form the signal peptide.

It belongs to the periplasmic pilus chaperone family.

The protein resides in the periplasm. Functionally, required for the biogenesis of long polar fimbria; binds and interact with LpfA. The sequence is that of Chaperone protein LpfB (lpfB) from Salmonella typhimurium (strain LT2 / SGSC1412 / ATCC 700720).